The chain runs to 304 residues: Ubiquitin thioesterase OTU1 (304 aa).

A UBX-like region spans residues 5-83 (RCKTREGTQL…IVEEDKSKLR (79 aa)). Residues 105–230 (IVRRVVPADN…GIHYDPLQRQ (126 aa)) enclose the OTU domain. The interval 110 to 116 (VPADNSC) is cys-loop. D113 is a catalytic residue. The Nucleophile role is filled by C116. The tract at residues 169 to 179 (IRREDTWGGAI) is variable-loop. A his-loop region spans residues 219-223 (YDGIH). Residue I222 coordinates substrate. Residue H223 is part of the active site. Positions 247–252 (DEALVQ) are S2 site. A C2H2-type zinc finger spans residues 274–298 (LRCMACQKGLTGQSAARDHAKETGH). Residue H298 is part of the active site.

Its subcellular location is the cytoplasm. The enzyme catalyses Thiol-dependent hydrolysis of ester, thioester, amide, peptide and isopeptide bonds formed by the C-terminal Gly of ubiquitin (a 76-residue protein attached to proteins as an intracellular targeting signal).. In terms of biological role, hydrolase that can remove conjugated ubiquitin from proteins and participates in endoplasmic reticulum-associated degradation (ERAD) for misfolded lumenal proteins. May act by triming the ubiquitin chain on the associated substrate to facilitate their threading through the VCP/p97 pore. Ubiquitin moieties on substrates may present a steric impediment to the threading process when the substrate is transferred to the VCP pore and threaded through VCP's axial channel. Mediates deubiquitination of 'Lys-27'-, 'Lys-29'- and 'Lys-33'-linked polyubiquitin chains. Also able to hydrolyze 'Lys-11'-linked ubiquitin chains. Cleaves both polyubiquitin and di-ubiquitin. The protein is Ubiquitin thioesterase OTU1 (yod1) of Xenopus laevis (African clawed frog).